Here is a 316-residue protein sequence, read N- to C-terminus: Probable metal transport system membrane protein TC_0342 (316 aa).

Transmembrane regions (helical) follow at residues 1 to 21, 39 to 59, 64 to 84, 94 to 114, 124 to 144, 171 to 191, 196 to 216, 226 to 246, 252 to 272, and 286 to 306; these read MFAS…IVFF, IQVI…TFLV, AMYA…ACLF, QNLT…IHFI, ASTA…LVFL, FLVL…FICV, VFAF…MFLL, AVGV…AKLI, EMMG…PALS, and SGLA…TVFV.

Belongs to the ABC-3 integral membrane protein family.

It is found in the cell inner membrane. Part of an ATP-driven transport system TC_0338/TC_0339/TC_0341/TC_0342 for a metal. In Chlamydia muridarum (strain MoPn / Nigg), this protein is Probable metal transport system membrane protein TC_0342.